The primary structure comprises 151 residues: Superoxide dismutase [Cu-Zn] A (151 aa).

Cysteine 6 is lipidated: S-palmitoyl cysteine. 3 residues coordinate Cu cation: histidine 45, histidine 47, and histidine 62. Cysteine 56 and cysteine 144 form a disulfide bridge. Histidine 62, histidine 70, histidine 79, and aspartate 82 together coordinate Zn(2+). Histidine 118 is a Cu cation binding site.

It belongs to the Cu-Zn superoxide dismutase family. Homodimer, and heterodimer of Superoxide dismutase [Cu-Zn] A and B. Cu cation serves as cofactor. Requires Zn(2+) as cofactor.

The protein localises to the cytoplasm. The protein resides in the nucleus. It carries out the reaction 2 superoxide + 2 H(+) = H2O2 + O2. Functionally, destroys radicals which are normally produced within the cells and which are toxic to biological systems. The polypeptide is Superoxide dismutase [Cu-Zn] A (sod1-a) (Xenopus laevis (African clawed frog)).